Here is a 108-residue protein sequence, read N- to C-terminus: Tetrahydromethanopterin S-methyltransferase subunit B (108 aa).

The helical transmembrane segment at 80–100 (AFYGIVVGLAFSGLLALIIFI) threads the bilayer.

Belongs to the MtrB family. In terms of assembly, the complex is composed of 8 subunits; MtrA, MtrB, MtrC, MtrD, MtrE, MtrF, MtrG and MtrH.

Its subcellular location is the cell membrane. The enzyme catalyses 5-methyl-5,6,7,8-tetrahydromethanopterin + coenzyme M + 2 Na(+)(in) = 5,6,7,8-tetrahydromethanopterin + methyl-coenzyme M + 2 Na(+)(out). Its pathway is one-carbon metabolism; methanogenesis from CO(2); methyl-coenzyme M from 5,10-methylene-5,6,7,8-tetrahydromethanopterin: step 2/2. Part of a complex that catalyzes the formation of methyl-coenzyme M and tetrahydromethanopterin from coenzyme M and methyl-tetrahydromethanopterin. This is an energy-conserving, sodium-ion translocating step. The chain is Tetrahydromethanopterin S-methyltransferase subunit B from Methanosarcina acetivorans (strain ATCC 35395 / DSM 2834 / JCM 12185 / C2A).